The primary structure comprises 329 residues: CDP-diacylglycerol--glycerol-3-phosphate 3-phosphatidyltransferase 1, chloroplastic (329 aa).

A chloroplast-targeting transit peptide spans M1–A38. Helical transmembrane passes span P150 to L170, V190 to A210, L217 to V237, and I300 to I320.

Belongs to the CDP-alcohol phosphatidyltransferase class-I family. It depends on Mn(2+) as a cofactor.

It localises to the plastid. Its subcellular location is the chloroplast membrane. It carries out the reaction a CDP-1,2-diacyl-sn-glycerol + sn-glycerol 3-phosphate = a 1,2-diacyl-sn-glycero-3-phospho-(1'-sn-glycero-3'-phosphate) + CMP + H(+). It participates in phospholipid metabolism; phosphatidylglycerol biosynthesis; phosphatidylglycerol from CDP-diacylglycerol: step 1/2. In terms of biological role, catalyzes the committed step to the synthesis of the acidic phospholipids. Transfers specifically a phosphatidyl group from CDP-diacylglycerol to glycerol-3-phosphate to form phosphatidylglycerophosphate. The sequence is that of CDP-diacylglycerol--glycerol-3-phosphate 3-phosphatidyltransferase 1, chloroplastic from Oryza sativa subsp. japonica (Rice).